Consider the following 788-residue polypeptide: Diacylglycerol kinase gamma (788 aa).

Over residues 83–93 (PRQETPDHPKE) the composition is skewed to basic and acidic residues. Positions 83 to 150 (PRQETPDHPK…WGEPNAPASS (68 aa)) are disordered. Positions 95-109 (ASSSEPNVSDSNAES) are enriched in polar residues. 2 consecutive EF-hand domains span residues 172–207 (RPQD…MLHV) and 217–252 (ELRP…TIPL). 8 residues coordinate Ca(2+): Asp185, Asp187, Asn189, Glu196, Asp230, Asn232, Asp234, and Glu241. 2 consecutive Phorbol-ester/DAG-type zinc fingers follow at residues 268–318 (RHAW…IPGC) and 333–380 (QHAW…STAC). A DAGKc domain is found at 427 to 561 (PGTHPLLVLV…LDRWYLEVMP (135 aa)). Residues 768 to 788 (MMGPPQKSSFFSLRRKSRSKD) are disordered.

The protein belongs to the eukaryotic diacylglycerol kinase family. As to expression, expressed specifically in brain. Highly expressed in cerebellar Purkinje cells (at protein level).

It is found in the membrane. The protein localises to the cytoplasm. The protein resides in the cytosol. It localises to the cytoskeleton. It carries out the reaction a 1,2-diacyl-sn-glycerol + ATP = a 1,2-diacyl-sn-glycero-3-phosphate + ADP + H(+). The enzyme catalyses 1,2-didecanoyl-sn-glycerol + ATP = 1,2-didecanoyl-sn-glycero-3-phosphate + ADP + H(+). It catalyses the reaction 1,2-di-(9Z-octadecenoyl)-sn-glycerol + ATP = 1,2-di-(9Z-octadecenoyl)-sn-glycero-3-phosphate + ADP + H(+). The catalysed reaction is 1-octadecanoyl-2-(9Z,12Z)-octadecadienoyl-sn-glycerol + ATP = 1-octadecanoyl-2-(9Z,12Z-octadecadienoyl)-sn-glycero-3-phosphate + ADP + H(+). It carries out the reaction 1-octadecanoyl-2-(5Z,8Z,11Z,14Z-eicosatetraenoyl)-sn-glycerol + ATP = 1-octadecanoyl-2-(5Z,8Z,11Z,14Z-eicosatetraenoyl)-sn-glycero-3-phosphate + ADP + H(+). The protein operates within lipid metabolism; glycerolipid metabolism. Its activity is regulated as follows. The activity is calcium-dependent. Requires phosphatidylserine for maximal activity. Diacylglycerol kinase that converts diacylglycerol/DAG into phosphatidic acid/phosphatidate/PA and regulates the respective levels of these two bioactive lipids. Thereby, acts as a central switch between the signaling pathways activated by these second messengers with different cellular targets and opposite effects in numerous biological processes. Has no apparent specificity with regard to the acyl compositions of diacylglycerol. Specifically expressed in the cerebellum where it controls the level of diacylglycerol which in turn regulates the activity of protein kinase C gamma. Through protein kinase C gamma, indirectly regulates the dendritic development of Purkinje cells, cerebellar long term depression and ultimately cerebellar motor coordination. This Rattus norvegicus (Rat) protein is Diacylglycerol kinase gamma (Dgkg).